The primary structure comprises 30 residues: Cytochrome c oxidase subunit 5C (30 aa).

A helical membrane pass occupies residues 15-30; sequence VVKELVIXXXLGLXAG.

The protein belongs to the cytochrome c oxidase subunit 5C family.

The protein resides in the mitochondrion inner membrane. Functionally, this protein is one of the nuclear-coded polypeptide chains of cytochrome c oxidase, the terminal oxidase in mitochondrial electron transport. This chain is Cytochrome c oxidase subunit 5C (COX5C), found in Solanum tuberosum (Potato).